A 1052-amino-acid polypeptide reads, in one-letter code: ATP-dependent DNA helicase MPH1 (1052 aa).

The Helicase ATP-binding domain occupies 89-256 (IVRKGLLQNI…EVVNNLNISK (168 aa)). An ATP-binding site is contributed by 102-109 (IPTGMGKT). A DEAH box motif is present at residues 204-207 (DEAH). The region spanning 432-649 (ELTQFFYENP…HLVQYRKSDR (218 aa)) is the Helicase C-terminal domain. Disordered regions lie at residues 495–550 (HGPK…NQKQ), 798–832 (IGDT…DLPL), 869–898 (SKRQ…QPEV), and 1002–1052 (HTVS…DSDF). The segment covering 503-532 (SDREKRLEEERRMDEEKKQAALQEKLERTS) has biased composition (basic and acidic residues). The span at 534–549 (RTGSSEEAQLSGMNQK) shows a compositional bias: polar residues. Composition is skewed to low complexity over residues 875 to 898 (QPEV…QPEV) and 1005 to 1028 (SQSQ…QQAS). Residues 1029-1040 (QKDRSSQDKDLT) are compositionally biased toward basic and acidic residues. The segment covering 1043-1052 (ELEDLLDSDF) has biased composition (acidic residues).

It belongs to the DEAD box helicase family. DEAH subfamily. FANCM sub-subfamily. In terms of assembly, interacts with the MHF histone-fold complex to form the FANCM-MHF complex.

It localises to the nucleus. It catalyses the reaction ATP + H2O = ADP + phosphate + H(+). ATP-dependent DNA helicase involved in DNA damage repair by homologous recombination and in genome maintenance. Capable of unwinding D-loops. Plays a role in limiting crossover recombinants during mitotic DNA double-strand break (DSB) repair. Component of a FANCM-MHF complex which promotes gene conversion at blocked replication forks, probably by reversal of the stalled fork. In Candida glabrata (strain ATCC 2001 / BCRC 20586 / JCM 3761 / NBRC 0622 / NRRL Y-65 / CBS 138) (Yeast), this protein is ATP-dependent DNA helicase MPH1.